The following is a 319-amino-acid chain: Peroxidase 62 (319 aa).

Positions 1–22 (MGLVRSFALVIVFLSCLIAVYG) are cleaved as a signal peptide. 4 disulfides stabilise this stretch: C34–C110, C67–C72, C116–C315, and C195–C226. Residue H65 is the Proton acceptor of the active site. 5 residues coordinate Ca(2+): D66, V69, G71, D73, and S75. Position 157 (P157) interacts with substrate. Position 188 (H188) interacts with heme b. T189 is a binding site for Ca(2+). N-linked (GlcNAc...) asparagine glycosylation is present at N204. Residues D239, S242, and D247 each contribute to the Ca(2+) site. A glycan (N-linked (GlcNAc...) asparagine) is linked at N253.

It belongs to the peroxidase family. Classical plant (class III) peroxidase subfamily. Requires heme b as cofactor. Ca(2+) serves as cofactor. As to expression, mainly expressed in roots.

Its subcellular location is the secreted. It catalyses the reaction 2 a phenolic donor + H2O2 = 2 a phenolic radical donor + 2 H2O. Functionally, removal of H(2)O(2), oxidation of toxic reductants, biosynthesis and degradation of lignin, suberization, auxin catabolism, response to environmental stresses such as wounding, pathogen attack and oxidative stress. These functions might be dependent on each isozyme/isoform in each plant tissue. The polypeptide is Peroxidase 62 (PER62) (Arabidopsis thaliana (Mouse-ear cress)).